A 446-amino-acid polypeptide reads, in one-letter code: Tubulin beta chain (446 aa).

Residues Gln11, Glu69, Ser138, Gly142, Thr143, Gly144, Asn204, and Asn226 each contribute to the GTP site. Glu69 contributes to the Mg(2+) binding site. Positions 426–446 (QDATAEEEGEYVEDEDEMDGM) are disordered. The span at 429–446 (TAEEEGEYVEDEDEMDGM) shows a compositional bias: acidic residues.

It belongs to the tubulin family. In terms of assembly, dimer of alpha and beta chains. A typical microtubule is a hollow water-filled tube with an outer diameter of 25 nm and an inner diameter of 15 nM. Alpha-beta heterodimers associate head-to-tail to form protofilaments running lengthwise along the microtubule wall with the beta-tubulin subunit facing the microtubule plus end conferring a structural polarity. Microtubules usually have 13 protofilaments but different protofilament numbers can be found in some organisms and specialized cells. The cofactor is Mg(2+).

The protein resides in the cytoplasm. It localises to the cytoskeleton. Its function is as follows. Tubulin is the major constituent of microtubules, a cylinder consisting of laterally associated linear protofilaments composed of alpha- and beta-tubulin heterodimers. Microtubules grow by the addition of GTP-tubulin dimers to the microtubule end, where a stabilizing cap forms. Below the cap, tubulin dimers are in GDP-bound state, owing to GTPase activity of alpha-tubulin. This is Tubulin beta chain from Euplotes crassus.